A 366-amino-acid chain; its full sequence is 2-aminoethylphosphonate--pyruvate transaminase (366 aa).

Residue lysine 192 is modified to N6-(pyridoxal phosphate)lysine.

The protein belongs to the class-V pyridoxal-phosphate-dependent aminotransferase family. PhnW subfamily. Homodimer. Requires pyridoxal 5'-phosphate as cofactor.

It carries out the reaction (2-aminoethyl)phosphonate + pyruvate = phosphonoacetaldehyde + L-alanine. Functionally, involved in phosphonate degradation. The sequence is that of 2-aminoethylphosphonate--pyruvate transaminase (phnW) from Lysinibacillus sphaericus (strain C3-41).